We begin with the raw amino-acid sequence, 1863 residues long: MMAASLLRRDKKSTAAHLKADLKRTDNSSGLRQLQELLDSVLNPERGSDPEALDWCKWLLAGGDGFDEFCRTVRSYDNATLCGLVWTANFVAYRCRTCGISPCMSLCAECFNNGDHTGHDFNMFRSQAGGACDCGDGNVMRESGFCNRHRLKTGENVPSVPRDLLLMSEMVLPRFIITIIQYLRDGYTEPESAADRDLQKVLQQLDPHISFLEELTKMGGAMRTVLTKILTDQQTFKELSMGQEDNVYAKKNYEKYLSALKSSGLVSVEEKGAAGGAGDGTSDAAAGAGALSLLGATATASLDDSSKEEDQDGLQGVGQRKRVKLSSSTKDPSIMDTLKHKCFLEELLFWTIKYEFPQKMVTFLLNMLPDQDYKITFTKTFVQHYAFIMKTLMKSHESDTMSNRIVHISVQLFSNEELARHVTEECQLLDIMVTVLLYMMESCLIKSELQDEENNRHVVVNCGEALLKNNTYWPLVSDFINILSHQSVAKRFLEDHSLLLLWMSFVSFFQGMNLNKRELNEHVEFESQTYYAAFAAELEACAQPMWGLLTHCKVKETQDYTKTVVRYCLETLQMWFDAIGFVDEPSLNQLTFHLPLHRYYAMFLSKGVKCQGLDLDSLLPDQEMLMKIMVHPLQIQASLSEIHSNMWVRNGLQIKGQAMTYVQSHFCNSMIDPDIYLLQVCASRLDPDYFISSVFERFKVVDLLTMASQHQNAVLDSEQERPMLEGALTFLVILCSLRIHLGMSDDEILRAEMVSQLCMNDRTHSSLLDLIPENPNPKSGVVPGSCSFEEMLSGVADFKAPVFEPGGSMQQGMYTPKAEVWEKEFDPIMVILRTVYRRDVQSAMDRYSAFLKQSGVHTGNPWPPYKERTPLHPCYKGLVRLLHCKTLHIVIFTLLYKIWMDHQNMSEHVLCMVLYLIELGLDNQVQDDKVEEEPCIEEHCHDSWFPGTSLLSNLHHVINFVRVRVPETAPEVERKRERERERETPPSTSSESATFGQNLREAQVFSLVAERRRKFQEIINRSNHEASQAVRPKSSASRWLPPGTPPQLVTEILEIRESMLSLLVKLHQKLSAKQNSLSLSWLAEVDPAHHAHGDGLTAIERILAKASARSRHSKRCLQEICGKVCPPIPPKKISPGDKKSMDKEERRQRARERQQKLLAEFASRQKSFMETAMDVESPEADAVMDVSSEESLDSEVLYDCVICGQSGPSTEDRPTGLVVLLQASSVLGHRCRSDMPKRLPTTDEEHIYPEDTCGATHDVRLSLMQRYFKDSSCLQSVSIGWDGGVYVQTCGHTLHIDCHKSYMESLRNDQVLQGISVDKGEFTCPLCRQFANSVLPCRPGRGMETGAWHAPSTKSMSTLVKEVEDLQEQLGIFPVRASIKQRDPILIESNLSKEMESVIKDIKNTTQKKYMDYGKNPGSPDNDFLFMYSVARTNLELELVHRGGNLCSGGASAAAKRSCLNQLFHVLAMHMRLYSIDSAYNPWTRLTLSTQSRENEYCDEERPEVPMLFRDVPSLLIIFILTMPQPLRKEHFTCVVKVLYSLQFTQALAALSIRFSREERLAWSNTGAAKKNLPNSDKSWESLLGHMISELTKAKDVYDTNSEETSALSSSVWSPQSIEFRLQQFCLPFLRLSCLLQHHLYGDSLPGCLVEEEFSLLTRCLGLAASVQCSGSMSSAACLEWNISAFDLISQWCSEVVALSDTPSQQSASLLGQDPQWAAPRLLQLPDNYNTIFQYYHRKSCSSCGKTPKDPALCLVCGAFVCLKGHCCKQQGVCECVLHSQHCGAATGIFLLINASVIIIIRGHRFCLWGSVYLDAHGEEDRDLRRGKPLYLCEERYRVLEQQWVAHTFDHINKRWGPHYNGL.

A UBR-type zinc finger spans residues 80–151 (TLCGLVWTAN…ESGFCNRHRL (72 aa)). Disordered stretches follow at residues 302 to 330 (LDDS…SSTK), 970 to 995 (PEVE…SATF), and 1128 to 1152 (IPPK…RARE). 2 stretches are compositionally biased toward basic and acidic residues: residues 971 to 984 (EVER…ERET) and 1134 to 1152 (SPGD…RARE). The RING-type; degenerate zinc-finger motif lies at 1270-1328 (DSSCLQSVSIGWDGGVYVQTCGHTLHIDCHKSYMESLRNDQVLQGISVDKGEFTCPLCR).

It belongs to the E3 ubiquitin-protein ligase UBR1-like family.

The catalysed reaction is S-ubiquitinyl-[E2 ubiquitin-conjugating enzyme]-L-cysteine + [acceptor protein]-L-lysine = [E2 ubiquitin-conjugating enzyme]-L-cysteine + N(6)-ubiquitinyl-[acceptor protein]-L-lysine.. Its pathway is protein modification; protein ubiquitination. Functionally, E3 ubiquitin-protein ligase which is a component of the N-end rule pathway. Recognizes and binds to proteins bearing specific N-terminal residues, leading to their ubiquitination and subsequent degradation. Positively regulates hedgehog/shh-signaling pathways that function in eye development, neuronal specification and somite development. Activation of shh up-regulates transcription of ubr3, which in turn promotes hedgehog/shh signaling possibly by controlling negative regulators such as Kif7. In Danio rerio (Zebrafish), this protein is E3 ubiquitin-protein ligase ubr3.